Here is a 136-residue protein sequence, read N- to C-terminus: Small ribosomal subunit protein uS11c (136 aa).

The disordered stretch occupies residues 1-22 (MAKAIPKKGSRGRIGSRKSTRK).

This sequence belongs to the universal ribosomal protein uS11 family. In terms of assembly, part of the 30S ribosomal subunit.

The protein resides in the plastid. It is found in the chloroplast. In Lactuca sativa (Garden lettuce), this protein is Small ribosomal subunit protein uS11c.